A 203-amino-acid polypeptide reads, in one-letter code: Thymidylate kinase (203 aa).

9-16 (GPEGAGKT) contacts ATP.

The protein belongs to the thymidylate kinase family.

It catalyses the reaction dTMP + ATP = dTDP + ADP. Its function is as follows. Phosphorylation of dTMP to form dTDP in both de novo and salvage pathways of dTTP synthesis. The sequence is that of Thymidylate kinase from Staphylococcus epidermidis (strain ATCC 35984 / DSM 28319 / BCRC 17069 / CCUG 31568 / BM 3577 / RP62A).